The chain runs to 509 residues: tRNA-2-methylthio-N(6)-dimethylallyladenosine synthase (509 aa).

A compositionally biased stretch (polar residues) spans 1–15; it reads MNEQQRLASQQVNSS. Residues 1 to 26 form a disordered region; the sequence is MNEQQRLASQQVNSSTKKEEKDYSKY. Positions 16–25 are enriched in basic and acidic residues; the sequence is TKKEEKDYSK. An MTTase N-terminal domain is found at 66 to 184; that stretch reads RKFYIRTYGC…LPYILKDAMF (119 aa). [4Fe-4S] cluster contacts are provided by Cys-75, Cys-111, Cys-145, Cys-221, Cys-225, and Cys-228. A Radical SAM core domain is found at 207–437; that stretch reads RRGDIKAWVN…NALVNKLAIE (231 aa). The 64-residue stretch at 440–503 folds into the TRAM domain; the sequence is DRYKGQIVEV…TWSLNGELVE (64 aa).

The protein belongs to the methylthiotransferase family. MiaB subfamily. Monomer. Requires [4Fe-4S] cluster as cofactor.

It is found in the cytoplasm. It catalyses the reaction N(6)-dimethylallyladenosine(37) in tRNA + (sulfur carrier)-SH + AH2 + 2 S-adenosyl-L-methionine = 2-methylsulfanyl-N(6)-dimethylallyladenosine(37) in tRNA + (sulfur carrier)-H + 5'-deoxyadenosine + L-methionine + A + S-adenosyl-L-homocysteine + 2 H(+). In terms of biological role, catalyzes the methylthiolation of N6-(dimethylallyl)adenosine (i(6)A), leading to the formation of 2-methylthio-N6-(dimethylallyl)adenosine (ms(2)i(6)A) at position 37 in tRNAs that read codons beginning with uridine. This is tRNA-2-methylthio-N(6)-dimethylallyladenosine synthase from Bacillus thuringiensis (strain Al Hakam).